The chain runs to 355 residues: NAD-dependent protein deacylase sirtuin-6 (355 aa).

Position 2 is an N-acetylserine (S2). S10 carries the phosphoserine modification. The Deacetylase sirtuin-type domain maps to 27-272 (PEELERKVWE…TQLMKHLGLE (246 aa)). An N6-acetyllysine modification is found at K33. NAD(+) is bound by residues A53, T57, F64, R65, W71, Q113, and H133. H133 functions as the Proton acceptor in the catalytic mechanism. 3 residues coordinate Zn(2+): C141, C144, and C166. Residue K170 forms a Glycyl lysine isopeptide (Lys-Gly) (interchain with G-Cter in ubiquitin) linkage. C177 contacts Zn(2+). Residues G214, S216, N240, Q242, and V258 each contribute to the NAD(+) site. Residues 284-355 (KALPPLPRPP…KRVKAEVTPS (72 aa)) are disordered. The segment covering 287 to 296 (PPLPRPPTPK) has biased composition (pro residues). A Phosphothreonine modification is found at T294. Phosphoserine is present on residues S303 and S330.

Belongs to the sirtuin family. Class IV subfamily. In terms of assembly, homodimer; binds to nucleosomes and DNA ends as a homodimer. Interacts with RELA; interferes with RELA binding to target DNA. Interacts with SMARCA5; promoting recruitment of SMARCA5/SNF2H to double-strand breaks (DSBs) sites. Interacts with the mTORC2 complex; preventing the ability of SIRT6 to deacetylate FOXO1. Interacts with the CLOCK-BMAL1 complex; recruited by the CLOCK-BMAL1 complex to regulate expression of clock-controlled genes. Interacts with CSNK2A2; preventing CSNK2A2 localization to the nucleus. In terms of processing, acetylated at Lys-33. Deacetylation at Lys-33 by SIRT1 promotes homomultimerization and binding to double-strand breaks (DSBs) sites. Post-translationally, phosphorylation at Ser-10 by MAPK8/JNK1 in response to oxidative stress stimulates the mono-ADP-ribosyltransferase activity on PARP1, leading to PARP1 recruitment to double-strand breaks (DSBs). Monoubiquitinated at Lys-170 by STUB1/CHIP, preventing its degradation by the proteasome. In terms of processing, sumoylated, leading to specifically decrease ability to deacetylate histone H3 at 'Lys-56' (H3K56ac).

The protein resides in the nucleus. Its subcellular location is the chromosome. It is found in the telomere. The protein localises to the endoplasmic reticulum. The enzyme catalyses N(6)-acetyl-L-lysyl-[protein] + NAD(+) + H2O = 2''-O-acetyl-ADP-D-ribose + nicotinamide + L-lysyl-[protein]. The catalysed reaction is N(6)-tetradecanoyl-L-lysyl-[protein] + NAD(+) + H2O = 2''-O-tetradecanoyl-ADP-D-ribose + nicotinamide + L-lysyl-[protein]. It carries out the reaction N(6)-hexadecanoyl-L-lysyl-[protein] + NAD(+) + H2O = 2''-O-hexadecanoyl-ADP-D-ribose + nicotinamide + L-lysyl-[protein]. It catalyses the reaction L-lysyl-[protein] + NAD(+) = N(6)-(ADP-D-ribosyl)-L-lysyl-[protein] + nicotinamide + H(+). The enzyme catalyses L-arginyl-[protein] + NAD(+) = N(omega)-(ADP-D-ribosyl)-L-arginyl-[protein] + nicotinamide + H(+). Its activity is regulated as follows. Compared to the defatty-acylase activity, the protein deacetylase activity is weak in vitro, and requires activation. The histone deacetylase activity is strongly activated upon binding to nucleosomes and chromatin in vivo. Two molecules of SIRT6 associate with the acidic patch of one nucleosome, while the C-terminal disordered region of SIRT6 associates with nucleosomal DNA, leading to efficient histone deacetylation. The protein-lysine deacetylase activity is also activated by long-chain free fatty-acids. NAD-dependent protein deacetylase, deacylase and mono-ADP-ribosyltransferase that plays an essential role in DNA damage repair, telomere maintenance, metabolic homeostasis, inflammation, tumorigenesis and aging. Displays protein-lysine deacetylase or defatty-acylase (demyristoylase and depalmitoylase) activity, depending on the context. Acts as a key histone deacetylase by catalyzing deacetylation of histone H3 at 'Lys-9', 'Lys-18' and 'Lys-56' (H3K9ac, H3K18ac and H3K56ac, respectively), suppressing target gene expression of several transcription factors, including NF-kappa-B. Acts as an inhibitor of transcription elongation by mediating deacetylation of H3K9ac and H3K56ac, preventing release of NELFE from chromatin and causing transcriptional pausing. Involved in DNA repair by promoting double-strand break (DSB) repair: acts as a DSB sensor by recognizing and binding DSB sites, leading to (1) recruitment of DNA repair proteins, such as SMARCA5/SNF2H, and (2) deacetylation of histone H3K9ac and H3K56ac. SIRT6 participation to DSB repair is probably involved in extension of life span. Also promotes DNA repair by deacetylating non-histone proteins, such as DDB2 and p53/TP53. Specifically deacetylates H3K18ac at pericentric heterochromatin, thereby maintaining pericentric heterochromatin silencing at centromeres and protecting against genomic instability and cellular senescence. Involved in telomere maintenance by catalyzing deacetylation of histone H3 in telomeric chromatin, regulating telomere position effect and telomere movement in response to DNA damage. Required for embryonic stem cell differentiation by mediating histone deacetylation of H3K9ac. Plays a major role in metabolism by regulating processes such as glycolysis, gluconeogenesis, insulin secretion and lipid metabolism. Inhibits glycolysis via histone deacetylase activity and by acting as a corepressor of the transcription factor HIF1A, thereby controlling the expression of multiple glycolytic genes. Has tumor suppressor activity by repressing glycolysis, thereby inhibiting the Warburg effect. Also regulates glycolysis and tumorigenesis by mediating deacetylation and nuclear export of non-histone proteins, such as isoform M2 of PKM (PKM2). Acts as a negative regulator of gluconeogenesis by mediating deacetylation of non-histone proteins, such as FOXO1 and KAT2A/GCN5. Promotes beta-oxidation of fatty acids during fasting by catalyzing deacetylation of NCOA2, inducing coactivation of PPARA. Acts as a regulator of lipid catabolism in brown adipocytes, both by catalyzing deacetylation of histones and non-histone proteins, such as FOXO1. Also acts as a regulator of circadian rhythms, both by regulating expression of clock-controlled genes involved in lipid and carbohydrate metabolism, and by catalyzing deacetylation of PER2. The defatty-acylase activity is specifically involved in regulation of protein secretion. Has high activity toward long-chain fatty acyl groups and mediates protein-lysine demyristoylation and depalmitoylation of target proteins, such as RRAS2 and TNF, thereby regulating their secretion. Also acts as a mono-ADP-ribosyltransferase by mediating mono-ADP-ribosylation of PARP1, TRIM28/KAP1 or SMARCC2/BAF170. Mono-ADP-ribosyltransferase activity is involved in DNA repair, cellular senescence, repression of LINE-1 retrotransposon elements and regulation of transcription. The sequence is that of NAD-dependent protein deacylase sirtuin-6 from Castor canadensis (American beaver).